The sequence spans 765 residues: Amyloid beta precursor like protein 2 (765 aa).

Residues 1 to 31 (MAATGTAAAAATGKLLVLLLLGLTAPAAALA) form the signal peptide. Over 32 to 695 (GYIEALAANA…LREDFSLSSS (664 aa)) the chain is Extracellular. The GFLD subdomain stretch occupies residues 46–139 (AVAEPQIAMF…PFKCLVGEFV (94 aa)). Positions 46 to 205 (AVAEPQIAMF…HGTEYVCCPQ (160 aa)) constitute an E1 domain. 6 cysteine pairs are disulfide-bonded: Cys56–Cys80, Cys91–Cys133, Cys116–Cys123, Cys149–Cys203, Cys160–Cys190, and Cys174–Cys202. Positions 147–205 (ENCQFFHQERMEVCEKHQRWHTVVKEACLTEGMTLYSYGMLLPCGVDQFHGTEYVCCPQ) are cuBD subdomain. Cu cation contacts are provided by His163, His167, and Tyr184. A disordered region spans residues 211–301 (SDSTMSKEEE…EPSSDGTISD (91 aa)). Ser216 bears the Phosphoserine mark. Acidic residues-rich tracts occupy residues 218–231 (EEEEEEEEDEEEDY) and 240–271 (TEADLEDFTEAAADEDEDEEEEEEEEGEEVVE). Basic and acidic residues predominate over residues 272–284 (DRDYYYDSFKGDD). Residues 308-366 (VKAVCSQEAMTGPCRAVMPRWYFDLSKGKCVRFIYGGCGGNRNNFESEDYCMAVCKTMI) enclose the BPTI/Kunitz inhibitor domain. Intrachain disulfides connect Cys312–Cys362, Cys321–Cys345, and Cys337–Cys358. One can recognise an E2 domain in the interval 375-566 (DVDVYFETSA…QEIQEEIDEL (192 aa)). Ser592 carries the post-translational modification Phosphoserine. The tract at residues 597-616 (EIPPFHPFHPFPSLSENEDT) is disordered. Ser628 carries O-linked (Xyl...) (chondroitin sulfate) serine glycosylation. The helical transmembrane segment at 696–718 (ALIGLLVIAVAIATVIVISLVML) threads the bilayer. Over 719–765 (RKRQYGTISHGIVEVHPMLTPEERHLNKMQNHGYENPTYKYLEQMQI) the chain is Cytoplasmic. An interaction with DAB2 region spans residues 751–765 (GYENPTYKYLEQMQI). Positions 752–757 (YENPTY) match the NPXY motif motif.

This sequence belongs to the APP family. As to quaternary structure, interacts with CPEB1. Interacts (via NPXY motif) with DAB2 (via PID domain); the interaction is impaired by tyrosine phosphorylation of the NPXY motif. Interacts (via cytoplasmic domain) with APBB2/FE65L. Interacts (via intracellular domain) with APBB3/FE65L2.

The protein resides in the membrane. Functionally, may play a role in the regulation of hemostasis. The soluble form may have inhibitory properties towards coagulation factors. May interact with cellular G-protein signaling pathways. May bind to the DNA 5'-GTCACATG-3'(CDEI box). Inhibits trypsin, chymotrypsin, plasmin, factor XIA and plasma and glandular kallikrein. Modulates the Cu/Zn nitric oxide-catalyzed autodegradation of GPC1 heparan sulfate side chains in fibroblasts. The chain is Amyloid beta precursor like protein 2 from Rattus norvegicus (Rat).